We begin with the raw amino-acid sequence, 238 residues long: Aspartate/glutamate leucyltransferase (238 aa).

It belongs to the R-transferase family. Bpt subfamily.

The protein localises to the cytoplasm. The enzyme catalyses N-terminal L-glutamyl-[protein] + L-leucyl-tRNA(Leu) = N-terminal L-leucyl-L-glutamyl-[protein] + tRNA(Leu) + H(+). It catalyses the reaction N-terminal L-aspartyl-[protein] + L-leucyl-tRNA(Leu) = N-terminal L-leucyl-L-aspartyl-[protein] + tRNA(Leu) + H(+). Its function is as follows. Functions in the N-end rule pathway of protein degradation where it conjugates Leu from its aminoacyl-tRNA to the N-termini of proteins containing an N-terminal aspartate or glutamate. This Shewanella oneidensis (strain ATCC 700550 / JCM 31522 / CIP 106686 / LMG 19005 / NCIMB 14063 / MR-1) protein is Aspartate/glutamate leucyltransferase.